The chain runs to 101 residues: Large ribosomal subunit protein uL24c (101 aa).

It belongs to the universal ribosomal protein uL24 family. In terms of assembly, part of the 50S ribosomal subunit.

It is found in the plastid. Its subcellular location is the chloroplast. Functionally, one of two assembly initiator proteins, it binds directly to the 5'-end of the 23S rRNA, where it nucleates assembly of the 50S subunit. The protein is Large ribosomal subunit protein uL24c (rpl24) of Guillardia theta (Cryptophyte).